The following is a 334-amino-acid chain: MITKNLPLTDLHRHLDGNIRTKTILELGQKFGIALPAYDIESLTPHVQIVEAEPSLVAFLSKLDWGVAVLGDLDACRRVAYENVEDALNAQIDYAELRFSPYYMAMKHKLPVAGVVEAVVDGVQAGMRDFGIKANLIGIMSRTFGTDACQQELDAILSQKDHIVAVDLAGDELGQPGERFVSHFKQVRDAGLNVTVHAGEAAGAESMWQAIQELGATRIGHGVKAIHDPKLMDYLAENRIGIESCLTSNFQTSTVDSLANHPLKQFLDHGVLACLNTDDPAVEGIELPYEYEVAAPAAGLSQEQIRQAQINGLELAFISDAEKAELKEKVKDRV.

Positions 12 and 14 each coordinate Zn(2+). Residues His14, Asp16, and Gly170 each coordinate substrate. His197 lines the Zn(2+) pocket. The Proton donor role is filled by Glu200. Asp278 lines the Zn(2+) pocket. Asp279 is a binding site for substrate.

Belongs to the metallo-dependent hydrolases superfamily. Adenosine and AMP deaminases family. Adenosine deaminase subfamily. Zn(2+) serves as cofactor.

It catalyses the reaction adenosine + H2O + H(+) = inosine + NH4(+). The catalysed reaction is 2'-deoxyadenosine + H2O + H(+) = 2'-deoxyinosine + NH4(+). Catalyzes the hydrolytic deamination of adenosine and 2-deoxyadenosine. The polypeptide is Adenosine deaminase (Vibrio parahaemolyticus serotype O3:K6 (strain RIMD 2210633)).